The following is a 263-amino-acid chain: Dihydropteroate synthase type-3 (263 aa).

In terms of domain architecture, Pterin-binding spans 2–257 (SKIFGIVNIT…DVKSLSDALK (256 aa)). Mg(2+) is bound at residue Asn9. Ser49 serves as a coordination point for 4-aminobenzoate. Residues Asp82, Asn101, and Asp172 each coordinate (7,8-dihydropterin-6-yl)methyl diphosphate. The 6-hydroxymethyl-7,8-dihydropterin site is built by Asn101 and Asp172. Residue Phe177 coordinates 4-aminobenzoate. Residue Lys211 coordinates (7,8-dihydropterin-6-yl)methyl diphosphate. Lys211 is a binding site for 6-hydroxymethyl-7,8-dihydropterin. 4-aminobenzoate is bound at residue Ser212. Position 245-247 (245-247 (RTH)) interacts with (7,8-dihydropterin-6-yl)methyl diphosphate.

It belongs to the DHPS family. The cofactor is Mg(2+).

It carries out the reaction (7,8-dihydropterin-6-yl)methyl diphosphate + 4-aminobenzoate = 7,8-dihydropteroate + diphosphate. It functions in the pathway cofactor biosynthesis; tetrahydrofolate biosynthesis; 7,8-dihydrofolate from 2-amino-4-hydroxy-6-hydroxymethyl-7,8-dihydropteridine diphosphate and 4-aminobenzoate: step 1/2. Its function is as follows. Catalyzes the condensation of para-aminobenzoate (pABA) with 6-hydroxymethyl-7,8-dihydropterin diphosphate (DHPt-PP) to form 7,8-dihydropteroate (H2Pte), the immediate precursor of folate derivatives. Confers resistance to sulfonamide antibiotics, including sulfamethoxazole (SMX), sulfadiazine and sulfisoxazole. In Escherichia coli, this protein is Dihydropteroate synthase type-3.